The sequence spans 631 residues: Nucleoside triphosphatase I (631 aa).

Residues 42-204 (FLGLDSMHSL…TMLVNLLRPG (163 aa)) form the Helicase ATP-binding domain. 55 to 62 (HETGVGKT) contributes to the ATP binding site. The short motif at 141 to 144 (DECH) is the DEXH box element. Residues 367 to 532 (KFIDVCLGIL…EFVQLFRVFK (166 aa)) enclose the Helicase C-terminal domain.

It belongs to the helicase family. NPH I subfamily. Monomer.

It carries out the reaction a ribonucleoside 5'-triphosphate + H2O = a ribonucleoside 5'-diphosphate + phosphate + H(+). Serves two roles in transcription; it acts in concert with viral termination factor/capping enzyme to catalyze release of UUUUUNU-containing nascent RNA from the elongation complex, and it acts by itself as a polymerase elongation factor to facilitate readthrough of intrinsic pause sites. In Homo sapiens (Human), this protein is Nucleoside triphosphatase I (NPH1).